Reading from the N-terminus, the 182-residue chain is Large ribosomal subunit protein uL6 (182 aa).

The protein belongs to the universal ribosomal protein uL6 family. Part of the 50S ribosomal subunit.

This protein binds to the 23S rRNA, and is important in its secondary structure. It is located near the subunit interface in the base of the L7/L12 stalk, and near the tRNA binding site of the peptidyltransferase center. This Dehalococcoides mccartyi (strain ATCC BAA-2100 / JCM 16839 / KCTC 5957 / BAV1) protein is Large ribosomal subunit protein uL6.